Reading from the N-terminus, the 160-residue chain is Putative control protein C.MjaVP (160 aa).

In terms of biological role, may be involved in control of expression of the type II restriction enzyme MjaV and/or its methyltransferase M.MjaV. The sequence is that of Putative control protein C.MjaVP from Methanocaldococcus jannaschii (strain ATCC 43067 / DSM 2661 / JAL-1 / JCM 10045 / NBRC 100440) (Methanococcus jannaschii).